The sequence spans 347 residues: Quinolinate synthase (347 aa).

Iminosuccinate contacts are provided by H47 and S68. C113 lines the [4Fe-4S] cluster pocket. Iminosuccinate contacts are provided by residues 139–141 (YAN) and S156. [4Fe-4S] cluster is bound at residue C200. Iminosuccinate-binding positions include 226–228 (HPE) and T243. C297 provides a ligand contact to [4Fe-4S] cluster.

This sequence belongs to the quinolinate synthase family. Type 1 subfamily. Requires [4Fe-4S] cluster as cofactor.

It localises to the cytoplasm. It catalyses the reaction iminosuccinate + dihydroxyacetone phosphate = quinolinate + phosphate + 2 H2O + H(+). It functions in the pathway cofactor biosynthesis; NAD(+) biosynthesis; quinolinate from iminoaspartate: step 1/1. Functionally, catalyzes the condensation of iminoaspartate with dihydroxyacetone phosphate to form quinolinate. The polypeptide is Quinolinate synthase (Escherichia coli O9:H4 (strain HS)).